We begin with the raw amino-acid sequence, 387 residues long: Phosphoglycerate kinase (387 aa).

Substrate-binding positions include 21 to 23 (DLN), Arg36, 59 to 62 (HLGR), Arg113, and Arg146. Residues Lys197, Glu314, and 340–343 (GGDT) each bind ATP.

The protein belongs to the phosphoglycerate kinase family. In terms of assembly, monomer.

The protein resides in the cytoplasm. The enzyme catalyses (2R)-3-phosphoglycerate + ATP = (2R)-3-phospho-glyceroyl phosphate + ADP. Its pathway is carbohydrate degradation; glycolysis; pyruvate from D-glyceraldehyde 3-phosphate: step 2/5. The chain is Phosphoglycerate kinase from Pseudomonas aeruginosa (strain ATCC 15692 / DSM 22644 / CIP 104116 / JCM 14847 / LMG 12228 / 1C / PRS 101 / PAO1).